A 209-amino-acid polypeptide reads, in one-letter code: N-(5'-phosphoribosyl)anthranilate isomerase (209 aa).

The protein belongs to the TrpF family.

It carries out the reaction N-(5-phospho-beta-D-ribosyl)anthranilate = 1-(2-carboxyphenylamino)-1-deoxy-D-ribulose 5-phosphate. Its pathway is amino-acid biosynthesis; L-tryptophan biosynthesis; L-tryptophan from chorismate: step 3/5. The protein is N-(5'-phosphoribosyl)anthranilate isomerase of Erythrobacter litoralis (strain HTCC2594).